A 664-amino-acid polypeptide reads, in one-letter code: Sodium/glucose cotransporter 1 (664 aa).

Topologically, residues 1–24 (MDSSTWSPPATATAEPLQAYERIR) are extracellular. The chain crosses the membrane as a helical span at residues 25–47 (NAADISVIVIYFVVVMAVGLWAM). Residues 48-66 (FSTNRGTVGGFFLAGRSMV) lie on the Cytoplasmic side of the membrane. Residues 67 to 90 (WWPIGASLFASNIGSGHFVGLAGT) traverse the membrane as a helical segment. Residues 91–95 (GAAAG) are Extracellular-facing. Residues 96–117 (IATGGFEWNALILVVLLGWVFV) traverse the membrane as a helical segment. Topologically, residues 118 to 139 (PIYIKAGVVTMPEYLRKRFGGQ) are cytoplasmic. A helical transmembrane segment spans residues 140–169 (RIQVYLSVLSLVLYIFTKISADIFSGAIFI). Residues 170–176 (NLALGLD) are Extracellular-facing. The chain crosses the membrane as a helical span at residues 177–193 (LYLAIFILLAITALYTI). Residues 194 to 202 (TGGLAAVIY) lie on the Cytoplasmic side of the membrane. Residues 203–221 (TDTLQTVIMLLGSFILTGF) form a helical membrane-spanning segment. Topologically, residues 222 to 275 (AFHEVGGYSAFVTKYMNAIPTVTSYGNTTVKKECYTPRADSFHIFRDPLKGDLP) are extracellular. A glycan (N-linked (GlcNAc...) asparagine) is linked at N248. Disulfide bonds link C255-C511, C255-C610, C345-C351, C355-C361, and C517-C522. The chain crosses the membrane as a helical span at residues 276–295 (WPGLIFGLTIISLWYWCTDQ). Topologically, residues 296–309 (VIVQRCLSAKNMSH) are cytoplasmic. A helical transmembrane segment spans residues 310-331 (VKAGCIMCGYMKLLPMFLMVMP). Topologically, residues 332 to 375 (GMISRILFTEKVACTVPSECEKYCGTKVGCTNIAYPTLVVELMP) are extracellular. The chain crosses the membrane as a helical span at residues 376–406 (NGLRGLMLSVMLASLMSSLTSIFNSASTLFT). The Cytoplasmic segment spans residues 407 to 422 (MDIYTKIRKKASEKEL). The chain crosses the membrane as a helical span at residues 423-444 (MIAGRLFMLVLIGVSIAWVPIV). Residues 445-451 (QSAQSGQ) lie on the Extracellular side of the membrane. The helical transmembrane segment at 452–477 (LFDYIQSITSYLGPPIAAVFLLAIFC) threads the bilayer. Position 457 (Q457) interacts with D-glucose. Residues 478-481 (KRVN) lie on the Cytoplasmic side of the membrane. The chain crosses the membrane as a helical span at residues 482–504 (EPGAFWGLIIGFLIGVSRMITEF). Over 505–525 (AYGTGSCMEPSNCPTIICGVH) the chain is Extracellular. Residues 526–547 (YLYFAIILFVITIIVILAISLF) form a helical membrane-spanning segment. Over 548 to 644 (TKPIADVHLY…TSEKRLWRMV (97 aa)) the chain is Cytoplasmic. A helical transmembrane segment spans residues 645 to 662 (VNINGIILLAVAVFCHAY). The Extracellular segment spans residues 663–664 (FA).

The protein belongs to the sodium:solute symporter (SSF) (TC 2.A.21) family. N-glycosylation is not necessary for the cotransporter function.

The protein resides in the apical cell membrane. It catalyses the reaction D-glucose(out) + 2 Na(+)(out) = D-glucose(in) + 2 Na(+)(in). The catalysed reaction is D-galactose(out) + 2 Na(+)(out) = D-galactose(in) + 2 Na(+)(in). Enhanced by the interaction with PDZK1IP1/MAP17; but unlike SLC5A2/SGLT2, PDZK1IP1 is not essential for SLC5A1 transporter activity. Possibly modulated by cholesterol binding. Its function is as follows. Electrogenic Na(+)-coupled sugar symporter that actively transports D-glucose or D-galactose at the plasma membrane, with a Na(+) to sugar coupling ratio of 2:1. Transporter activity is driven by a transmembrane Na(+) electrochemical gradient set by the Na(+)/K(+) pump. Has a primary role in the transport of dietary monosaccharides from enterocytes to blood. Responsible for the absorption of D-glucose or D-galactose across the apical brush-border membrane of enterocytes, whereas basolateral exit is provided by GLUT2. Additionally, functions as a D-glucose sensor in enteroendocrine cells, triggering the secretion of the incretins GCG and GIP that control food intake and energy homeostasis. Together with SGLT2, functions in reabsorption of D-glucose from glomerular filtrate, playing a nonredundant role in the S3 segment of the proximal tubules. Transports D-glucose into endometrial epithelial cells, controlling glycogen synthesis and nutritional support for the embryo as well as the decidual transformation of endometrium prior to conception. Acts as a water channel enabling passive water transport in response to the osmotic gradient created upon sugar and Na(+) uptake. Has high water conductivity comparable to aquaporins and therefore is expected to play an important role in transepithelial water permeability, especially in the small intestine. This is Sodium/glucose cotransporter 1 (SLC5A1) from Ovis aries (Sheep).